A 284-amino-acid chain; its full sequence is 4-diphosphocytidyl-2-C-methyl-D-erythritol kinase (284 aa).

Lys-9 is an active-site residue. 90–100 (PLVSGLGGDSS) serves as a coordination point for ATP. Asp-132 is a catalytic residue.

Belongs to the GHMP kinase family. IspE subfamily.

It carries out the reaction 4-CDP-2-C-methyl-D-erythritol + ATP = 4-CDP-2-C-methyl-D-erythritol 2-phosphate + ADP + H(+). Its pathway is isoprenoid biosynthesis; isopentenyl diphosphate biosynthesis via DXP pathway; isopentenyl diphosphate from 1-deoxy-D-xylulose 5-phosphate: step 3/6. In terms of biological role, catalyzes the phosphorylation of the position 2 hydroxy group of 4-diphosphocytidyl-2C-methyl-D-erythritol. The sequence is that of 4-diphosphocytidyl-2-C-methyl-D-erythritol kinase from Dehalococcoides mccartyi (strain ATCC BAA-2100 / JCM 16839 / KCTC 5957 / BAV1).